A 145-amino-acid polypeptide reads, in one-letter code: Ribosome-binding factor A (145 aa).

The interval 126–145 (RDLDTETDAEAGSETTKEED) is disordered. The span at 130–145 (TETDAEAGSETTKEED) shows a compositional bias: acidic residues.

It belongs to the RbfA family. In terms of assembly, monomer. Binds 30S ribosomal subunits, but not 50S ribosomal subunits or 70S ribosomes.

Its subcellular location is the cytoplasm. In terms of biological role, one of several proteins that assist in the late maturation steps of the functional core of the 30S ribosomal subunit. Associates with free 30S ribosomal subunits (but not with 30S subunits that are part of 70S ribosomes or polysomes). Required for efficient processing of 16S rRNA. May interact with the 5'-terminal helix region of 16S rRNA. The protein is Ribosome-binding factor A of Azorhizobium caulinodans (strain ATCC 43989 / DSM 5975 / JCM 20966 / LMG 6465 / NBRC 14845 / NCIMB 13405 / ORS 571).